A 274-amino-acid polypeptide reads, in one-letter code: MAIVKCKPTSPGRRFVVKVVNQELHKGAPHAPLLEKKSKTGGRNNNGRITTRHIGGGHKQHYRLVDFRRNDKDGITATVERIEYDPNRTAHIALLLYADGERRYIIAPKGVSAGDQLIAGALAPIKPGNALQLRNIPVGSTVHGIELKPGKGAQIARSAGASAQLIAREGVYVTLRLRSGEMRKVLSECRATLGEVSNSEHSLRSLGKAGAKRWRGVRPTVRGVAMNPVDHPHGGGEGRTSGGRHPVSPWGFPTKGAKTRGNKRTDKMIVRRRK.

2 disordered regions span residues 28–54 (APHA…TRHI) and 224–274 (VAMN…RRRK). Residues 263 to 274 (KRTDKMIVRRRK) are compositionally biased toward basic and acidic residues.

It belongs to the universal ribosomal protein uL2 family. In terms of assembly, part of the 50S ribosomal subunit. Forms a bridge to the 30S subunit in the 70S ribosome.

Functionally, one of the primary rRNA binding proteins. Required for association of the 30S and 50S subunits to form the 70S ribosome, for tRNA binding and peptide bond formation. It has been suggested to have peptidyltransferase activity; this is somewhat controversial. Makes several contacts with the 16S rRNA in the 70S ribosome. The protein is Large ribosomal subunit protein uL2 of Pseudomonas syringae pv. tomato (strain ATCC BAA-871 / DC3000).